Consider the following 122-residue polypeptide: Large ribosomal subunit protein uL14 (122 aa).

Belongs to the universal ribosomal protein uL14 family. Part of the 50S ribosomal subunit. Forms a cluster with proteins L3 and L19. In the 70S ribosome, L14 and L19 interact and together make contacts with the 16S rRNA in bridges B5 and B8.

Its function is as follows. Binds to 23S rRNA. Forms part of two intersubunit bridges in the 70S ribosome. The polypeptide is Large ribosomal subunit protein uL14 (Leuconostoc citreum (strain KM20)).